The primary structure comprises 738 residues: uncharacterized protein (738 aa).

Polar residues predominate over residues 1–10 (MQKKVVQSAS). 3 disordered regions span residues 1–23 (MQKKVVQSASKNEELDPHYKRSS), 53–83 (EGTHSASVHPSTSSTSHISSPSAFSVQNPNP), and 219–266 (HQDG…PLST). Over residues 55–77 (THSASVHPSTSSTSHISSPSAFS) the composition is skewed to low complexity. Over residues 246-266 (GSPSPNRSLNVSNNTTPPLST) the composition is skewed to polar residues. Thr260 and Thr261 each carry phosphothreonine. A DNA-binding region (zn(2)-C6 fungal-type) is located at residues 292–318 (CAKCQKDNKKCDDARPCQRCIKAKTDC). A compositionally biased stretch (basic residues) spans 323-335 (RKKRPTGVRRGPY). Disordered regions lie at residues 323–372 (RKKR…SDNQ) and 441–464 (DETGTSSAGSKPFNRKSRNRSFTN). Positions 340–352 (DTSNNTKSTTASS) are enriched in low complexity. Over residues 353–372 (GHSTQDSLSSKMLDPSSDNQ) the composition is skewed to polar residues.

Its subcellular location is the cytoplasm. It is found in the nucleus. This is an uncharacterized protein from Schizosaccharomyces pombe (strain 972 / ATCC 24843) (Fission yeast).